The sequence spans 340 residues: Tartrate-resistant acid phosphatase type 5 (340 aa).

A signal peptide spans Met1 to Val20. Positions 41, 79, 82, and 118 each coordinate Fe cation. Residues Asn124 and Asn155 are each glycosylated (N-linked (GlcNAc...) asparagine). A disulfide bridge links Cys169 with Cys227. The Fe cation site is built by His213, His248, and His250.

It depends on Fe cation as a cofactor.

It localises to the secreted. It carries out the reaction a phosphate monoester + H2O = an alcohol + phosphate. Functionally, uteroferrin is a phosphoprotein phosphatase, synthesized in response to progesterone. It appears to function in transplacental transport of iron in pig. In Sus scrofa (Pig), this protein is Tartrate-resistant acid phosphatase type 5 (ACP5).